The following is a 297-amino-acid chain: MSGSYQHLSNVGSRVMKRLGNRPKNFLPHSEKFIKKSTPEFMKSDLKEVDEKTSFKSEKEWKFIPGDRVVVMSGASKGNIAVIKSFDKRTNSFILDENGPTKTVPVPKQFWLEGQTSHMITIPVSILGKDLRLVADIDDEKTPGKTRTVAVRDVSFNGSYYDADYKKVMPYRCVKGQPDLIIPWPKPDPIDVQTNLATDPVIAREQTFWVDSVVRNPIPKKAIPSIRNPHSKYKRGTLTAKDIAKLVAPEMPLTEVRKSHLAEKKELAEREVPKLTEEDMEAIGARVFEFLEKQKRE.

Serine 2 carries the N-acetylserine modification. A KOW domain is found at 63–96; it reads FIPGDRVVVMSGASKGNIAVIKSFDKRTNSFILD.

This sequence belongs to the universal ribosomal protein uL24 family. Component of the mitochondrial large ribosomal subunit (mt-LSU). Mature yeast 74S mitochondrial ribosomes consist of a small (37S) and a large (54S) subunit. The 37S small subunit contains a 15S ribosomal RNA (15S mt-rRNA) and 34 different proteins. The 54S large subunit contains a 21S rRNA (21S mt-rRNA) and 46 different proteins. uL24m forms the wall of the exit tunnel.

The protein resides in the mitochondrion. Component of the mitochondrial ribosome (mitoribosome), a dedicated translation machinery responsible for the synthesis of mitochondrial genome-encoded proteins, including at least some of the essential transmembrane subunits of the mitochondrial respiratory chain. The mitoribosomes are attached to the mitochondrial inner membrane and translation products are cotranslationally integrated into the membrane. The sequence is that of Large ribosomal subunit protein uL24m (MRPL40) from Saccharomyces cerevisiae (strain ATCC 204508 / S288c) (Baker's yeast).